A 619-amino-acid polypeptide reads, in one-letter code: MARIIGIDLGTSNTAAAAMEGGRATIIPSAEGSSIGGKAFPSYVAFTKDGQRLVGEPARRQAIANPEGTVTAFKRRMGEDYKFTLRGQEFTPQQLSAFVLQKVKKDAEAFLGEPVEKAVITVPAYFNDNQRQATKDAGRIAGLEVVRLVNEPTAAALAYGIDKAGKEQKIMVFDLGGGTLDVTIMEMGKEGTFDVLSTSGDTKLGGTDMDNAIIEWMVSEFKKSTGIDLSADKQAAQRLKDAAEKAKIELSTTMETDINLPFISAGADGPKHLELKLSRAKLESLVDSIVKRCGASIDQALNDSSLKSTEIDKIILVGGPTRMPIVQKYVEDHAGKKIERGIDPMECVATGAAVQAGILTGDVKDVLLLDVTPLSLGLETLGGVTTRLIERNTTIPVRKTQVFSTASDNQPAVTINVLQGERPMAKDNVPLGKFDLDGIPPAPRGVPQIEVTFDIDANGILNVSAKDLGTNKQQHITITSKTKLSDDEVQKFVKEAEKFADEDKKTKERVDAKNEADSVLFQTEKALKEHGDKVPQEDRLNIDRALGDLKEALKGDDVERIKKAKDDALAASQKLGEIIYKESQAKAQGAAGPQPGAQAQGQPNDGGKEDVVEAEVVDK.

Position 179 is a phosphothreonine; by autocatalysis (Thr179). The disordered stretch occupies residues 584 to 619 (QAKAQGAAGPQPGAQAQGQPNDGGKEDVVEAEVVDK). Low complexity predominate over residues 585–605 (AKAQGAAGPQPGAQAQGQPND). The span at 606–619 (GGKEDVVEAEVVDK) shows a compositional bias: basic and acidic residues.

It belongs to the heat shock protein 70 family.

Its function is as follows. Acts as a chaperone. This Elusimicrobium minutum (strain Pei191) protein is Chaperone protein DnaK.